Reading from the N-terminus, the 428-residue chain is Serine hydroxymethyltransferase (428 aa).

(6S)-5,6,7,8-tetrahydrofolate-binding positions include Leu-127 and Gly-131 to Leu-133. N6-(pyridoxal phosphate)lysine is present on Lys-236.

It belongs to the SHMT family. Homodimer. The cofactor is pyridoxal 5'-phosphate.

It localises to the cytoplasm. The catalysed reaction is (6R)-5,10-methylene-5,6,7,8-tetrahydrofolate + glycine + H2O = (6S)-5,6,7,8-tetrahydrofolate + L-serine. The protein operates within one-carbon metabolism; tetrahydrofolate interconversion. It participates in amino-acid biosynthesis; glycine biosynthesis; glycine from L-serine: step 1/1. Functionally, catalyzes the reversible interconversion of serine and glycine with tetrahydrofolate (THF) serving as the one-carbon carrier. This reaction serves as the major source of one-carbon groups required for the biosynthesis of purines, thymidylate, methionine, and other important biomolecules. Also exhibits THF-independent aldolase activity toward beta-hydroxyamino acids, producing glycine and aldehydes, via a retro-aldol mechanism. The protein is Serine hydroxymethyltransferase of Tropheryma whipplei (strain TW08/27) (Whipple's bacillus).